The chain runs to 417 residues: Prostaglandin E2 receptor EP3 subtype (417 aa).

Residues 1-52 (MKATRDHASAPFCTRFNHSDPGIWAAERAVEAPNNLTLPPEPSEDCGSVSVA) lie on the Extracellular side of the membrane. Asn-17 and Asn-35 each carry an N-linked (GlcNAc...) asparagine glycan. Residues 53-77 (FSMTMMITGFVGNALAITLVSKSYR) form a helical membrane-spanning segment. The Cytoplasmic portion of the chain corresponds to 78–90 (RREGKRKKSFLLC). Residues 91-111 (IGWLALTDMVGQLLTSPVVIV) traverse the membrane as a helical segment. Residues 112–130 (LYLSHQRWEQLDPSGRLCT) are Extracellular-facing. A helical transmembrane segment spans residues 131 to 152 (FFGLTMTVFGLSSLFIASAMAV). At 153–174 (ERALATRAPHWYSSHMKTSVTR) the chain is on the cytoplasmic side. Residues 175 to 196 (AVLLGVWLAVLAFALLPVLGVG) form a helical membrane-spanning segment. Residues 197–226 (QYTIQWPGTWCFISTGPGGNGTNSRQNWGN) lie on the Extracellular side of the membrane. N-linked (GlcNAc...) asparagine glycosylation is present at Asn-216. A helical transmembrane segment spans residues 227 to 252 (VFFASAFAILGLSALVVTFACNLATI). Topologically, residues 253–282 (KALVSRCRAKATASQSSAQWGRITTETAIQ) are cytoplasmic. A helical transmembrane segment spans residues 283–306 (LMGIMCVLSVCWSPLLIMMLKMIF). Asn-307 is a glycosylation site (N-linked (GlcNAc...) asparagine). Residues 307–326 (NHTSVEHCKTYTENQDECNF) lie on the Extracellular side of the membrane. A helical transmembrane segment spans residues 327 to 348 (FLIAVRLASLNQILDPWVYLLL). Residues 349 to 417 (RKILLQKFCQ…HIYLHTLEHQ (69 aa)) are Cytoplasmic-facing.

Belongs to the G-protein coupled receptor 1 family. Interacts (via C-terminus) with MKLN1.

The protein resides in the cell membrane. Receptor for prostaglandin E2 (PGE2). The various isoforms have identical ligand binding properties but interact with different second messenger systems: isoform EP3A couples to G(i)/G(o) proteins; isoform EP3B and isoform EP3C couple to G(s), and isoform EP3D couples to G(i), G(s) and G(p). Required for normal development of fever in response to pyrinogens, including IL1B, prostaglandin E2 and bacterial lipopolysaccharide (LPS). Required for normal potentiation of platelet aggregation by prostaglandin E2, and thus plays a role in the regulation of blood coagulation. Required for increased HCO3(-) secretion in the duodenum in response to mucosal acidification, and thereby contributes to the protection of the mucosa against acid-induced ulceration. Not required for normal kidney function, normal urine volume and osmolality. The chain is Prostaglandin E2 receptor EP3 subtype (PTGER3) from Bos taurus (Bovine).